The primary structure comprises 344 residues: AGDASSGFFRAVADGCPITHTSCSAPHRRLTKVSVIGAGNVGMAIAQTILTQNLADEIALVDALPDKLRGEALDLQHAAAFLPRVRIVSGTDAAVTKNSDLIVVTAGARQIPGETRLNLLQRNVALYRKIVPPVAEHSPDALLLVVSNPVDVLTYVAWKLSGFPASRVIGSGTNLDSSRFRFLVAEHLDVSAQDVQAYMVGEHGDSSVAIWSSISVGGMPALKSLRDSHRSFDEAALEGIRRAVVGGAYEVIGLKGYTSWAIGYSVASLATSLLRDQRRVHPVSVLAAGFHGISDGHEVFLSLPARLGRAGVLGVAEMDLTEAEAAQLRRSAKTLWENCQLLGL.

NAD(+)-binding positions include 62-67 (DALPDK) and Arg109. The substrate site is built by Arg116, Asn148, and Arg179. Asn148 lines the NAD(+) pocket. Residue His203 is the Proton acceptor of the active site. Substrate is bound at residue Thr258.

It belongs to the LDH/MDH superfamily. LDH family. In terms of assembly, tetramer that arise from random association of LDH-A and LDH-B.

It carries out the reaction (S)-lactate + NAD(+) = pyruvate + NADH + H(+). It participates in fermentation; pyruvate fermentation to lactate; (S)-lactate from pyruvate: step 1/1. This chain is L-lactate dehydrogenase B, found in Hordeum vulgare (Barley).